The primary structure comprises 887 residues: Replication origin-binding protein (887 aa).

Residues 1 to 28 (MPSIGPIPTIPDEGSRGSSATAAPRRAM) form a disordered region. The region spanning 93–258 (PNNPSSRRVT…ASARGERSVH (166 aa)) is the Helicase ATP-binding domain. 106-113 (APMGSGKT) contacts ATP.

This sequence belongs to the herpesviridae OriBP family. In terms of assembly, homodimer. Interacts with the major DNA-binding protein. Interacts with the DNA helicase/primase complex-associated protein and the polymerase accessory protein.

The protein resides in the host nucleus. Functionally, functions as a docking protein to recruit essential components of the viral replication machinery to viral DNA origins. In the presence of the major DNA-binding protein, opens dsDNA leading to a conformational change in the origin that facilitates DNA unwinding and subsequent replication. The sequence is that of Replication origin-binding protein from Equus caballus (Horse).